A 266-amino-acid polypeptide reads, in one-letter code: Pyridoxal phosphate phosphatase YigL (266 aa).

Catalysis depends on Asp8, which acts as the Nucleophile. Residue Asp8 coordinates Mg(2+). Phosphate is bound at residue Leu9. Asp10 is a binding site for Mg(2+). Residues 42–43 (TG) and Lys191 contribute to the phosphate site. Asp214 serves as a coordination point for Mg(2+). Residue Asn217 coordinates phosphate.

Belongs to the HAD-like hydrolase superfamily. Cof family. It depends on Mg(2+) as a cofactor. Requires Mn(2+) as cofactor. The cofactor is Co(2+). Zn(2+) serves as cofactor.

The enzyme catalyses pyridoxal 5'-phosphate + H2O = pyridoxal + phosphate. It catalyses the reaction sugar phosphate + H2O = sugar + phosphate.. Functionally, catalyzes Strongly the dephosphorylation of pyridoxal-phosphate (PLP) and moderately the dephosphorylation of 2-deoxyglucose 6-phosphate (2bGLU6P) and beta-glucose 6-phosphate (bGlu6P). Also hydrolyzes both purines (GMP and IMP) and pyrimidines as secondary substrates. The sequence is that of Pyridoxal phosphate phosphatase YigL (yigL) from Escherichia coli (strain K12).